The primary structure comprises 680 residues: Probable galacturonosyltransferase 3 (680 aa).

Topologically, residues 1–6 (MTTFST) are cytoplasmic. The helical; Signal-anchor for type II membrane protein transmembrane segment at 7 to 27 (CAAFLSLVVVLHAVHVGGAIL) threads the bilayer. The Lumenal segment spans residues 28–680 (ESQAPHRELK…PYLRRCDINE (653 aa)). Residues 118 to 146 (SFQNDTGMEDNASHSTTNQTDESENQFPN) are disordered. Residues Asn-121, Asn-128, Asn-135, Asn-239, Asn-386, Asn-438, Asn-545, Asn-578, Asn-610, and Asn-631 are each glycosylated (N-linked (GlcNAc...) asparagine). Residues 130 to 145 (SHSTTNQTDESENQFP) show a composition bias toward polar residues.

This sequence belongs to the glycosyltransferase 8 family. Expressed in roots, inflorescences, siliques, leaves and stems.

The protein localises to the golgi apparatus membrane. It participates in glycan metabolism; pectin biosynthesis. May be involved in pectin and/or xylans biosynthesis in cell walls. The sequence is that of Probable galacturonosyltransferase 3 (GAUT3) from Arabidopsis thaliana (Mouse-ear cress).